The primary structure comprises 335 residues: Cholinephosphotransferase 1 (335 aa).

2 helical membrane passes run 53 to 73 (PNAI…PLIA) and 84 to 108 (FWAY…GKQA). Asparagine 54 contributes to the CDP-choline binding site. Aspartate 101 and aspartate 104 together coordinate Mg(2+). Arginine 109 contributes to the CDP-choline binding site. 6 helical membrane passes run 116–140 (PLGE…SCIA), 151–169 (FFCC…WQTY), 181–197 (VTEV…VSAF), 213–238 (ELKF…RIIF), 267–276 (IGPGLLFLDQ), and 284–313 (EYVV…IAAH). Aspartate 122 contributes to the Mg(2+) binding site. Histidine 123 acts as the Proton acceptor in catalysis. Aspartate 126 is a Mg(2+) binding site.

Belongs to the CDP-alcohol phosphatidyltransferase class-I family. Mg(2+) is required as a cofactor. The cofactor is Mn(2+).

It localises to the golgi apparatus membrane. The catalysed reaction is CDP-choline + a 1,2-diacyl-sn-glycerol = a 1,2-diacyl-sn-glycero-3-phosphocholine + CMP + H(+). It carries out the reaction 1-octadecanoyl-2-(5Z,8Z,11Z,14Z-eicosatetraenoyl)-sn-glycerol + CDP-choline = 1-octadecanoyl-2-(5Z,8Z,11Z,14Z-eicosatetraenoyl)-sn-glycero-3-phosphocholine + CMP + H(+). It catalyses the reaction 1-hexadecanoyl-2-(9Z-octadecenoyl)-sn-glycerol + CDP-choline = 1-hexadecanoyl-2-(9Z-octadecenoyl)-sn-glycero-3-phosphocholine + CMP + H(+). The enzyme catalyses 1-hexadecanoyl-2-(4Z,7Z,10Z,13Z,16Z,19Z-docosahexaenoyl)-sn-glycerol + CDP-choline = 1-hexadecanoyl-2-(4Z,7Z,10Z,13Z,16Z,19Z-docosahexaenoyl)-sn-glycero-3-phosphocholine + CMP + H(+). The catalysed reaction is 1,2-dioctanoyl-sn-glycerol + CDP-choline = 1,2-dioctanoyl-sn-glycero-3-phosphocholine + CMP + H(+). Its pathway is phospholipid metabolism; phosphatidylcholine biosynthesis; phosphatidylcholine from phosphocholine: step 2/2. Functionally, catalyzes the final step of de novo phosphatidylcholine (PC) synthesis, i.e. the transfer of choline phosphate from CDP-choline to the free hydroxyl of a diacylglycerol (DAG), producing a PC. It thereby plays a central role in the formation and maintenance of vesicular membranes. This chain is Cholinephosphotransferase 1 (CHPT1), found in Gallus gallus (Chicken).